The following is a 254-amino-acid chain: 4-hydroxy-tetrahydrodipicolinate reductase (254 aa).

G7–I12 is an NAD(+) binding site. R35 lines the NADP(+) pocket. NAD(+)-binding positions include G91–T93 and A115–M118. Catalysis depends on H147, which acts as the Proton donor/acceptor. Residue H148 coordinates (S)-2,3,4,5-tetrahydrodipicolinate. K151 functions as the Proton donor in the catalytic mechanism. (S)-2,3,4,5-tetrahydrodipicolinate is bound at residue G157–T158.

The protein belongs to the DapB family.

It localises to the cytoplasm. The enzyme catalyses (S)-2,3,4,5-tetrahydrodipicolinate + NAD(+) + H2O = (2S,4S)-4-hydroxy-2,3,4,5-tetrahydrodipicolinate + NADH + H(+). The catalysed reaction is (S)-2,3,4,5-tetrahydrodipicolinate + NADP(+) + H2O = (2S,4S)-4-hydroxy-2,3,4,5-tetrahydrodipicolinate + NADPH + H(+). It participates in amino-acid biosynthesis; L-lysine biosynthesis via DAP pathway; (S)-tetrahydrodipicolinate from L-aspartate: step 4/4. Catalyzes the conversion of 4-hydroxy-tetrahydrodipicolinate (HTPA) to tetrahydrodipicolinate. The sequence is that of 4-hydroxy-tetrahydrodipicolinate reductase from Helicobacter pylori (strain HPAG1).